We begin with the raw amino-acid sequence, 499 residues long: Probable aspartyl protease At4g16563 (499 aa).

Positions 1-26 are cleaved as a signal peptide; it reads MKTCLIFFLYTTILQYYFHFSVSSLS. In terms of domain architecture, Peptidase A1 spans 83–487; it reads YLISLSVGSS…DLLNRRVGFA (405 aa). Residue Asp-101 is part of the active site. The cysteines at positions 111 and 119 are disulfide-linked. Asn-175 and Asn-211 each carry an N-linked (GlcNAc...) asparagine glycan. Residue Asp-353 is part of the active site. Cys-396 and Cys-445 form a disulfide bridge. Residues Asn-400 and Asn-415 are each glycosylated (N-linked (GlcNAc...) asparagine).

The protein belongs to the peptidase A1 family.

This Arabidopsis thaliana (Mouse-ear cress) protein is Probable aspartyl protease At4g16563.